The following is an 83-amino-acid chain: Apolipoprotein C-I, basic form (83 aa).

Residues 1–26 (MRLFLSLPVLVVVLSMVLEGPAPVQG) form the signal peptide.

The protein belongs to the apolipoprotein C1 family.

It localises to the secreted. Its function is as follows. Inhibitor of lipoprotein binding to the low density lipoprotein (LDL) receptor, LDL receptor-related protein, and very low density lipoprotein (VLDL) receptor. Associates with high density lipoproteins (HDL) and the triacylglycerol-rich lipoproteins in the plasma and makes up about 10% of the protein of the VLDL and 2% of that of HDL. Appears to interfere directly with fatty acid uptake and is also the major plasma inhibitor of cholesteryl ester transfer protein (CETP). Binds free fatty acids and reduces their intracellular esterification. Modulates the interaction of APOE with beta-migrating VLDL and inhibits binding of beta-VLDL to the LDL receptor-related protein. The sequence is that of Apolipoprotein C-I, basic form (APOC1) from Papio anubis (Olive baboon).